Consider the following 108-residue polypeptide: Protein S100-A15A (108 aa).

The region spanning 53–88 (KEPYYITELFQAADKNKDNQICFDEFLYILGKLVKD) is the EF-hand domain. Ca(2+)-binding residues include D66, N68, D70, Q72, and E77.

The protein belongs to the S-100 family.

The sequence is that of Protein S100-A15A (S100A15A) from Pongo abelii (Sumatran orangutan).